Reading from the N-terminus, the 109-residue chain is UPF0060 membrane protein mma_0129 (109 aa).

4 consecutive transmembrane segments (helical) span residues 7–27, 31–51, 63–83, and 87–107; these read VALF…PYLW, GASI…VWLL, AAYG…VDGI, and NWDF…LFAP.

The protein belongs to the UPF0060 family.

Its subcellular location is the cell inner membrane. This chain is UPF0060 membrane protein mma_0129, found in Janthinobacterium sp. (strain Marseille) (Minibacterium massiliensis).